The following is a 216-amino-acid chain: Ribose-5-phosphate isomerase A (216 aa).

Substrate contacts are provided by residues 26–29 (TGST), 79–82 (DGAD), and 92–95 (KGGG). E101 acts as the Proton acceptor in catalysis. Residue K119 participates in substrate binding.

Belongs to the ribose 5-phosphate isomerase family. Homodimer.

It carries out the reaction aldehydo-D-ribose 5-phosphate = D-ribulose 5-phosphate. It functions in the pathway carbohydrate degradation; pentose phosphate pathway; D-ribose 5-phosphate from D-ribulose 5-phosphate (non-oxidative stage): step 1/1. Functionally, catalyzes the reversible conversion of ribose-5-phosphate to ribulose 5-phosphate. The chain is Ribose-5-phosphate isomerase A from Legionella pneumophila (strain Corby).